Consider the following 505-residue polypeptide: MEEFQGYLELYRSQQHDFLYPLIFREYIYALAHDRGLNRSVLLDNVGYDKKSSLLIIKRLISRMYHQNHFIISVNDSNQNKFLGYNKNLYSQMISEGFAVIVEIPFSLRLVSSLEETEIVKSYNLRSIHSIFPFLEDKFPHLNYASDVLIPYPIHLEILVQTLRYYVKDPSSLHLLRLFLHEYYNWNTLITITPKKSIFAKSNQRLFLLLYNSYVCEYESILLFLRNQSNHLRLTSSGILFERIRFYEKIKYPVEEVFANDFPATLWFFKDPFIQYVRYQGKSILASKDTPLLMNKWKYYLVHFWQCHFYVWSQPGRIHRNQLSKHSFDFLGYLSSIRPNISVVRSQLLENSFLMDNAMKKLDTLFPIIPMIGSLAKVKFCNTSGHPISKSSWADSSDSDIIDRFVRIGGNLSHYYSGSSKKKSLYRIKYILRLSCVKTLARKHKSTVRTFLKRLGPKLLDEFFTEEEQIFSLLFPRTSSTLKRFYRGRIWYLDILCINDLVNHE.

Belongs to the intron maturase 2 family. MatK subfamily.

The protein localises to the plastid. The protein resides in the chloroplast. Usually encoded in the trnK tRNA gene intron. Probably assists in splicing its own and other chloroplast group II introns. The chain is Maturase K from Rosa stellata (Star rose).